The sequence spans 59 residues: Chromatin protein Cren7 (59 aa).

This sequence belongs to the Cren7 family. Monomer. In terms of processing, methylated at multiple sites, to varying extents.

It localises to the chromosome. The protein localises to the cytoplasm. Functionally, a chromatin protein, binds double-stranded DNA without sequence specificity. Constrains negative DNA supercoils. The polypeptide is Chromatin protein Cren7 (Pyrobaculum arsenaticum (strain DSM 13514 / JCM 11321 / PZ6)).